The sequence spans 278 residues: NAD kinase (278 aa).

Residue aspartate 67 is the Proton acceptor of the active site. NAD(+)-binding positions include 67-68 (DG), arginine 72, 137-138 (NE), lysine 148, arginine 165, aspartate 167, 178-183 (TGYALS), and glutamine 237.

This sequence belongs to the NAD kinase family. The cofactor is a divalent metal cation.

Its subcellular location is the cytoplasm. It carries out the reaction NAD(+) + ATP = ADP + NADP(+) + H(+). Involved in the regulation of the intracellular balance of NAD and NADP, and is a key enzyme in the biosynthesis of NADP. Catalyzes specifically the phosphorylation on 2'-hydroxyl of the adenosine moiety of NAD to yield NADP. This chain is NAD kinase, found in Thermococcus gammatolerans (strain DSM 15229 / JCM 11827 / EJ3).